Here is a 117-residue protein sequence, read N- to C-terminus: Small ribosomal subunit protein bS6 (117 aa).

The segment at 96–117 (KEAAAPAPKAAPVESAPAVEAE) is disordered. Positions 99–117 (AAPAPKAAPVESAPAVEAE) are enriched in low complexity.

It belongs to the bacterial ribosomal protein bS6 family.

Its function is as follows. Binds together with bS18 to 16S ribosomal RNA. The chain is Small ribosomal subunit protein bS6 from Geobacter sulfurreducens (strain ATCC 51573 / DSM 12127 / PCA).